Reading from the N-terminus, the 346-residue chain is Elongation factor 1-alpha (346 aa).

The 127-residue stretch at 1 to 127 (GTSQADVALL…DNVEPPKRPS (127 aa)) folds into the tr-type G domain. 49–52 (NKMD) is a binding site for GTP.

The protein belongs to the TRAFAC class translation factor GTPase superfamily. Classic translation factor GTPase family. EF-Tu/EF-1A subfamily.

The protein resides in the cytoplasm. Its function is as follows. This protein promotes the GTP-dependent binding of aminoacyl-tRNA to the A-site of ribosomes during protein biosynthesis. The polypeptide is Elongation factor 1-alpha (Eimeria bovis).